A 468-amino-acid polypeptide reads, in one-letter code: GDNF family receptor alpha-1 (468 aa).

An N-terminal signal peptide occupies residues 1–24 (MFLATLYFVLPLLDLLMSAEVSGG). Tandem repeats lie at residues 25 to 113 (DRLD…LQGN), 150 to 238 (KGNN…YEER), and 239 to 342 (ERPN…KNAI). The cysteines at positions 36 and 42 are disulfide-linked. N59 is a glycosylation site (N-linked (GlcNAc...) asparagine). Disulfide bonds link C154/C214, C161/C167, C178/C192, C187/C233, C216/C221, C243/C313, C250/C256, C267/C285, C277/C337, and C315/C325. Residues N347 and N406 are each glycosylated (N-linked (GlcNAc...) asparagine). S430 carries GPI-anchor amidated serine lipidation. The propeptide at 431–468 (HITTKSMAAPPSCGLSSLPVMVFTALAALLSVSLAETS) is removed in mature form.

It belongs to the GDNFR family. As to quaternary structure, interacts with GDNF ligand and RET: forms a 2:2:2 ternary complex composed of GDNF ligand, GFRA1 and RET receptor. Interacts with SORL1, either alone or in complex with GDNF. Interaction between SORL1 and GFRA1 leads to GFRA1 internalization, but not degradation. As to expression, expressed in the brain, in hippocampal neurons (at protein level). Isoform 1 and isoform 2 are expressed in heart, brain, lung, liver, kidney and testis.

The protein localises to the cell membrane. The protein resides in the golgi apparatus. It is found in the trans-Golgi network. Its subcellular location is the endosome. It localises to the multivesicular body. Its function is as follows. Coreceptor for GDNF, a neurotrophic factor that enhances survival and morphological differentiation of dopaminergic neurons and increases their high-affinity dopamine uptake. GDNF-binding leads to autophosphorylation and activation of the RET receptor. This Mus musculus (Mouse) protein is GDNF family receptor alpha-1 (Gfra1).